We begin with the raw amino-acid sequence, 244 residues long: tRNA (guanine-N(1)-)-methyltransferase (244 aa).

Residues glycine 110 and isoleucine 129–leucine 134 contribute to the S-adenosyl-L-methionine site.

It belongs to the RNA methyltransferase TrmD family. Homodimer.

The protein resides in the cytoplasm. It carries out the reaction guanosine(37) in tRNA + S-adenosyl-L-methionine = N(1)-methylguanosine(37) in tRNA + S-adenosyl-L-homocysteine + H(+). Functionally, specifically methylates guanosine-37 in various tRNAs. The chain is tRNA (guanine-N(1)-)-methyltransferase from Syntrophomonas wolfei subsp. wolfei (strain DSM 2245B / Goettingen).